A 469-amino-acid polypeptide reads, in one-letter code: Putative dipeptidase SE_1424 (469 aa).

A Zn(2+)-binding site is contributed by His-84. Asp-86 is a catalytic residue. Asp-115 contributes to the Zn(2+) binding site. The active-site Proton acceptor is the Glu-149. Glu-150, Asp-173, and His-440 together coordinate Zn(2+).

It belongs to the peptidase M20A family. Requires Zn(2+) as cofactor.

In Staphylococcus epidermidis (strain ATCC 12228 / FDA PCI 1200), this protein is Putative dipeptidase SE_1424.